Here is a 331-residue protein sequence, read N- to C-terminus: N-arachidonyl glycine receptor (331 aa).

Residues 1–26 (MITLNNQDQPVPFNNSYPDEYEIAAL) lie on the Extracellular side of the membrane. The N-linked (GlcNAc...) asparagine glycan is linked to asparagine 14. The chain crosses the membrane as a helical span at residues 27–47 (VFYSCIFIIGLFVNITALWVF). At 48–56 (SCTTKKRTT) the chain is on the cytoplasmic side. Residues 57–77 (VTIYMMNVALVDLIFIMTLPF) form a helical membrane-spanning segment. Topologically, residues 78 to 95 (RMFYYAKDEWPFGEYFCQ) are extracellular. Cysteine 94 and cysteine 172 form a disulfide bridge. The helical transmembrane segment at 96 to 116 (ILGALTVFYPSIALWLLAFIS) threads the bilayer. Residues 117 to 138 (ADRYMAIVQPKYAKELKNTCKA) lie on the Cytoplasmic side of the membrane. Residues 139-159 (VLACVGVWIMTLTTTIPLLLL) form a helical membrane-spanning segment. The Extracellular portion of the chain corresponds to 160-191 (HKDPDKDSTPATCLKISDIVYLKAVNVLNFTR). Asparagine 188 carries N-linked (GlcNAc...) asparagine glycosylation. A helical transmembrane segment spans residues 192 to 212 (LTFFFLIPLFIMIGCYLVIIH). Topologically, residues 213–232 (NLLHGRTSKLKPKVKEKSIR) are cytoplasmic. A helical transmembrane segment spans residues 233 to 253 (IIITLLVQVLVCFMPFHICFA). The Extracellular segment spans residues 254 to 268 (FLMLGTGENSYSPWG). Residues 269-289 (AFTTFLMNLSTCLDVILYYIV) traverse the membrane as a helical segment. The Cytoplasmic portion of the chain corresponds to 290-331 (SKQFQARVISVMLYRNYLRGMRRKSFRSGSLRSLSNINSEML). Serine 322 carries the phosphoserine modification.

It belongs to the G-protein coupled receptor 1 family.

The protein resides in the cell membrane. The protein localises to the cytoplasmic vesicle membrane. Its function is as follows. G protein-coupled receptor (GPCR) that plays a role in diverse physiological processes particularly within the immune and nervous systems. Becomes active when triggered by various endogenous ligands including endocannabinoid N-arachidonyl glycine (NAGly), delta-9-tetrahydrocannabinol or resolvin D2/RvD2 derived from the omega-3 fatty acid docosahexaenoic acid (DHA). Upon RvD2 binding, facilitates the resolution of inflammation, aiding in tissue repair and homeostasis. Mechanistically, RvD2 ligation initiates Galphas protein coupling, activation of cAMP-PKA signaling pathway and phosphorylation of STAT3, leading to RvD2-stimulated macrophage phagocytosis. Mediates NAGly-induced process of reorganization of actin filaments and induction of acrosomal exocytosis. Activation by N-arachidonoyl glycine (NAGly) can also induce apoptosis in macrophages. Plays a role in homeostasis of CD8+ subsets of intraepithelial lymphocytes (IELs) (CD8alphaalpha and CD8alphabeta IELs) in small intestine by supporting preferential migration of CD8alphaalpha T-cells to intraepithelial compartment over lamina propria compartment, and by mediating their reconstitution into small intestine after bone marrow transplant. Participates also in hypotensive responses, mediating reduction in intraocular and blood pressure. In Macaca fascicularis (Crab-eating macaque), this protein is N-arachidonyl glycine receptor.